The following is a 507-amino-acid chain: ATP synthase subunit alpha, chloroplastic (507 aa).

170–177 (GDRQTGKT) contacts ATP.

Belongs to the ATPase alpha/beta chains family. In terms of assembly, F-type ATPases have 2 components, CF(1) - the catalytic core - and CF(0) - the membrane proton channel. CF(1) has five subunits: alpha(3), beta(3), gamma(1), delta(1), epsilon(1). CF(0) has four main subunits: a, b, b' and c.

It localises to the plastid. Its subcellular location is the chloroplast thylakoid membrane. The enzyme catalyses ATP + H2O + 4 H(+)(in) = ADP + phosphate + 5 H(+)(out). Produces ATP from ADP in the presence of a proton gradient across the membrane. The alpha chain is a regulatory subunit. In Morus indica (Mulberry), this protein is ATP synthase subunit alpha, chloroplastic.